The chain runs to 320 residues: ATP-dependent 6-phosphofructokinase (320 aa).

G11 is a binding site for ATP. Residue 21–25 (RAIAR) coordinates ADP. Residues 72–73 (RF) and 102–105 (GDGS) each bind ATP. D103 is a binding site for Mg(2+). Substrate contacts are provided by residues 125 to 127 (TID), R162, and 169 to 171 (MGR). The Proton acceptor role is filled by D127. ADP-binding positions include 185–187 (GAD) and 213–215 (KDH). Residues E222, R243, and 249 to 252 (HIQR) each bind substrate.

This sequence belongs to the phosphofructokinase type A (PFKA) family. ATP-dependent PFK group I subfamily. Prokaryotic clade 'B1' sub-subfamily. As to quaternary structure, homotetramer. The cofactor is Mg(2+).

Its subcellular location is the cytoplasm. It carries out the reaction beta-D-fructose 6-phosphate + ATP = beta-D-fructose 1,6-bisphosphate + ADP + H(+). The protein operates within carbohydrate degradation; glycolysis; D-glyceraldehyde 3-phosphate and glycerone phosphate from D-glucose: step 3/4. Its activity is regulated as follows. Allosterically activated by ADP and other diphosphonucleosides, and allosterically inhibited by phosphoenolpyruvate. In terms of biological role, catalyzes the phosphorylation of D-fructose 6-phosphate to fructose 1,6-bisphosphate by ATP, the first committing step of glycolysis. In Ligilactobacillus salivarius (strain UCC118) (Lactobacillus salivarius), this protein is ATP-dependent 6-phosphofructokinase.